The chain runs to 79 residues: Short neurotoxin 3 (79 aa).

The signal sequence occupies residues 1–23 (MKTLLLTLVVMTIVCLDLGYTLT). Cystine bridges form between C24–C41, C34–C59, C63–C71, and C72–C77.

Belongs to the three-finger toxin family. Short-chain subfamily. Expressed by the venom gland.

The protein localises to the secreted. This is Short neurotoxin 3 from Oxyuranus scutellatus scutellatus (Australian taipan).